The sequence spans 143 residues: Ribosomal RNA large subunit methyltransferase H (143 aa).

The S-adenosyl-L-methionine site is built by L68 and G95.

The protein belongs to the RNA methyltransferase RlmH family. In terms of assembly, homodimer.

It is found in the cytoplasm. It carries out the reaction pseudouridine(1915) in 23S rRNA + S-adenosyl-L-methionine = N(3)-methylpseudouridine(1915) in 23S rRNA + S-adenosyl-L-homocysteine + H(+). Its function is as follows. Specifically methylates the pseudouridine at position 1915 (m3Psi1915) in 23S rRNA. In Mycoplasma mobile (strain ATCC 43663 / 163K / NCTC 11711) (Mesomycoplasma mobile), this protein is Ribosomal RNA large subunit methyltransferase H.